The following is a 114-amino-acid chain: Large ribosomal subunit protein bL21 (114 aa).

Belongs to the bacterial ribosomal protein bL21 family. As to quaternary structure, part of the 50S ribosomal subunit. Contacts protein L20.

Its function is as follows. This protein binds to 23S rRNA in the presence of protein L20. The chain is Large ribosomal subunit protein bL21 from Protochlamydia amoebophila (strain UWE25).